The following is a 272-amino-acid chain: Indole-3-glycerol phosphate synthase (272 aa).

It belongs to the TrpC family.

The enzyme catalyses 1-(2-carboxyphenylamino)-1-deoxy-D-ribulose 5-phosphate + H(+) = (1S,2R)-1-C-(indol-3-yl)glycerol 3-phosphate + CO2 + H2O. The protein operates within amino-acid biosynthesis; L-tryptophan biosynthesis; L-tryptophan from chorismate: step 4/5. The chain is Indole-3-glycerol phosphate synthase from Mycobacterium leprae (strain Br4923).